The primary structure comprises 356 residues: Histidinol-phosphate aminotransferase (356 aa).

N6-(pyridoxal phosphate)lysine is present on Lys211.

This sequence belongs to the class-II pyridoxal-phosphate-dependent aminotransferase family. Histidinol-phosphate aminotransferase subfamily. In terms of assembly, homodimer. The cofactor is pyridoxal 5'-phosphate.

It catalyses the reaction L-histidinol phosphate + 2-oxoglutarate = 3-(imidazol-4-yl)-2-oxopropyl phosphate + L-glutamate. It participates in amino-acid biosynthesis; L-histidine biosynthesis; L-histidine from 5-phospho-alpha-D-ribose 1-diphosphate: step 7/9. This Blochmanniella floridana protein is Histidinol-phosphate aminotransferase.